The following is a 286-amino-acid chain: Beta-lactamase SHV-1 (286 aa).

The N-terminal stretch at 1 to 21 is a signal peptide; it reads MRYIRLCIISLLATLPLAVHA. Serine 66 serves as the catalytic Acyl-ester intermediate. An intrachain disulfide couples cysteine 73 to cysteine 119. Glutamate 164 functions as the Proton acceptor in the catalytic mechanism. A substrate-binding site is contributed by 230–232; sequence KTG.

Belongs to the class-A beta-lactamase family.

The enzyme catalyses a beta-lactam + H2O = a substituted beta-amino acid. In Escherichia coli, this protein is Beta-lactamase SHV-1 (bla).